Reading from the N-terminus, the 65-residue chain is Small, acid-soluble spore protein H 3 (65 aa).

Belongs to the SspH family.

The protein resides in the spore core. This is Small, acid-soluble spore protein H 3 from Geobacillus thermodenitrificans (strain NG80-2).